The primary structure comprises 467 residues: tRNA-2-methylthio-N(6)-dimethylallyladenosine synthase (467 aa).

The interval 1-20 (MSDDTTQIEPAMAQETSPRA) is disordered. The MTTase N-terminal domain maps to 23–143 (RKVFVKTYGC…LPNALARVRG (121 aa)). C32, C68, C106, C184, C188, and C191 together coordinate [4Fe-4S] cluster. The Radical SAM core domain occupies 170–402 (RKRGVSAFLT…QALLSAQQYA (233 aa)). One can recognise a TRAM domain in the interval 405–467 (DSMIGRKMDV…TNSLIAQKLA (63 aa)).

This sequence belongs to the methylthiotransferase family. MiaB subfamily. As to quaternary structure, monomer. It depends on [4Fe-4S] cluster as a cofactor.

It is found in the cytoplasm. It carries out the reaction N(6)-dimethylallyladenosine(37) in tRNA + (sulfur carrier)-SH + AH2 + 2 S-adenosyl-L-methionine = 2-methylsulfanyl-N(6)-dimethylallyladenosine(37) in tRNA + (sulfur carrier)-H + 5'-deoxyadenosine + L-methionine + A + S-adenosyl-L-homocysteine + 2 H(+). Functionally, catalyzes the methylthiolation of N6-(dimethylallyl)adenosine (i(6)A), leading to the formation of 2-methylthio-N6-(dimethylallyl)adenosine (ms(2)i(6)A) at position 37 in tRNAs that read codons beginning with uridine. This is tRNA-2-methylthio-N(6)-dimethylallyladenosine synthase from Brucella suis (strain ATCC 23445 / NCTC 10510).